The sequence spans 512 residues: MVNIRPEEISSIIRKQIEQYNQEVRVINIGTVLQVGDGIARIYGLDKVMSGELLEFEDGTIGIALNLESDNVGAVLMGEGLSIQEGSSVKATGKIAQIPVSDGYLGRVVNALARPIDGKGDIPASEFRLIESAAPGIISRRSVYEPMQTGLIAIDAMIPIGRGQRELIIGDRQTGKTAVATDTILNQKGNNVICVYVAIGQKASSVAQVLNTFEERGAMDYTIIVSEPANSPATLQYLAPYTGAALAEFFMYKGRHTLVIYDDLSKQAQAYRQMSLLLRRPPGREAYPGDVFYLHSRLLERAAKLNSQLGEGSMTALPIVETQAGDVSAYIPTNVISITDGQIFLSADLFNSGIRPAINVGISVSRVGSAAQIKAMKQVAGKLKLELAQFAELEAFSQFASDLDKATQNQLARGQRLRELLKQSQSSPLAVEDQVATIYTGVNGYLDILSVGQVRRFLVQLREYIASNKSEFTEIVKSTKTFTDKAEKILKEALQEYTELFLAQEELEKTKS.

170 to 177 contributes to the ATP binding site; the sequence is GDRQTGKT.

It belongs to the ATPase alpha/beta chains family. In terms of assembly, F-type ATPases have 2 components, CF(1) - the catalytic core - and CF(0) - the membrane proton channel. CF(1) has five subunits: alpha(3), beta(3), gamma(1), delta(1), epsilon(1). CF(0) has four main subunits: a, b, b' and c.

It is found in the plastid. It localises to the chloroplast thylakoid membrane. The catalysed reaction is ATP + H2O + 4 H(+)(in) = ADP + phosphate + 5 H(+)(out). Produces ATP from ADP in the presence of a proton gradient across the membrane. The alpha chain is a regulatory subunit. In Chaetosphaeridium globosum (Charophycean green alga), this protein is ATP synthase subunit alpha, chloroplastic.